Here is a 201-residue protein sequence, read N- to C-terminus: FMN-dependent NADH:quinone oxidoreductase (201 aa).

Residues S10, 16-18 (SQS), 96-99 (MYNF), and 140-143 (SRGG) contribute to the FMN site.

Belongs to the azoreductase type 1 family. Homodimer. FMN serves as cofactor.

The catalysed reaction is 2 a quinone + NADH + H(+) = 2 a 1,4-benzosemiquinone + NAD(+). It catalyses the reaction N,N-dimethyl-1,4-phenylenediamine + anthranilate + 2 NAD(+) = 2-(4-dimethylaminophenyl)diazenylbenzoate + 2 NADH + 2 H(+). Quinone reductase that provides resistance to thiol-specific stress caused by electrophilic quinones. In terms of biological role, also exhibits azoreductase activity. Catalyzes the reductive cleavage of the azo bond in aromatic azo compounds to the corresponding amines. The polypeptide is FMN-dependent NADH:quinone oxidoreductase (Shigella flexneri serotype 5b (strain 8401)).